The chain runs to 376 residues: MEDFSEQQLFFMRRAIEIGEKGRITAPPNPWVGCVVVQENRIIGEGFHAYAGGPHAEELAIQNASMPISGSDVYVSLEPCSHFGSCPPCANLLIKHKVSRVFVALVDPDPKVAGQGIAMLRQAGIQVYVGIGESEAQASLQPYLYQRTHNFPWTILKSAASVDGQVADSQGKSQWITCPEARHDVGKLRAESQAILVGSRTVLSDDPWLTARQPQGMLYPKQPLRVVLDSRGSVPPTSKVFDKTSPTLYVTTERCPENYIKVLDSLDVPVLLTESTPSGVDLHKVYEYLAQKKILQVLVEGGTTLHTSLLKERFVNSLVLYSGPMILGDQKRPLVGVLGNLLESASPLTLKSSQILGNSLKVVWEISPQVFEPIRN.

The tract at residues 1–150 is deaminase; sequence MEDFSEQQLF…QPYLYQRTHN (150 aa). One can recognise a CMP/dCMP-type deaminase domain in the interval 6-128; that stretch reads EQQLFFMRRA…MLRQAGIQVY (123 aa). Histidine 55 is a binding site for Zn(2+). Glutamate 57 serves as the catalytic Proton donor. The Zn(2+) site is built by cysteine 80 and cysteine 89. The reductase stretch occupies residues 151–376; it reads FPWTILKSAA…SPQVFEPIRN (226 aa). Alanine 159 serves as a coordination point for NADP(+). Serine 173 is a binding site for substrate. Tryptophan 175 provides a ligand contact to NADP(+). Residue arginine 189 coordinates substrate. NADP(+) contacts are provided by threonine 201 and aspartate 205. 2 residues coordinate substrate: leucine 209 and arginine 212. Position 230 (serine 230) interacts with NADP(+). Position 300 (glutamate 300) interacts with substrate. 302–308 serves as a coordination point for NADP(+); it reads GTTLHTS.

This sequence in the N-terminal section; belongs to the cytidine and deoxycytidylate deaminase family. It in the C-terminal section; belongs to the HTP reductase family. Requires Zn(2+) as cofactor.

The catalysed reaction is 2,5-diamino-6-hydroxy-4-(5-phosphoribosylamino)-pyrimidine + H2O + H(+) = 5-amino-6-(5-phospho-D-ribosylamino)uracil + NH4(+). It carries out the reaction 5-amino-6-(5-phospho-D-ribitylamino)uracil + NADP(+) = 5-amino-6-(5-phospho-D-ribosylamino)uracil + NADPH + H(+). It participates in cofactor biosynthesis; riboflavin biosynthesis; 5-amino-6-(D-ribitylamino)uracil from GTP: step 2/4. It functions in the pathway cofactor biosynthesis; riboflavin biosynthesis; 5-amino-6-(D-ribitylamino)uracil from GTP: step 3/4. In terms of biological role, converts 2,5-diamino-6-(ribosylamino)-4(3h)-pyrimidinone 5'-phosphate into 5-amino-6-(ribosylamino)-2,4(1h,3h)-pyrimidinedione 5'-phosphate. The sequence is that of Riboflavin biosynthesis protein RibD (ribD) from Chlamydia pneumoniae (Chlamydophila pneumoniae).